Here is a 100-residue protein sequence, read N- to C-terminus: Urease subunit gamma (100 aa).

Belongs to the urease gamma subunit family. Heterotrimer of UreA (gamma), UreB (beta) and UreC (alpha) subunits. Three heterotrimers associate to form the active enzyme.

It is found in the cytoplasm. The catalysed reaction is urea + 2 H2O + H(+) = hydrogencarbonate + 2 NH4(+). It participates in nitrogen metabolism; urea degradation; CO(2) and NH(3) from urea (urease route): step 1/1. The protein is Urease subunit gamma of Chelativorans sp. (strain BNC1).